The following is a 453-amino-acid chain: SH2 domain-containing protein 4A (453 aa).

The stretch at 96–127 (EIIAEQARREAEKEAEQLRKKQEVELSQLSTL) forms a coiled coil. A disordered region spans residues 280 to 301 (AVKRPPIPPKPKLPPSANNSSI). Pro residues predominate over residues 284 to 293 (PPIPPKPKLP). The SH2 domain maps to 347 to 439 (WFHGIISRQE…LGRELLRFPC (93 aa)).

The protein localises to the cytoplasm. Inhibits estrogen-induced cell proliferation. The polypeptide is SH2 domain-containing protein 4A (sh2d4a) (Xenopus tropicalis (Western clawed frog)).